Consider the following 137-residue polypeptide: Putative pre-16S rRNA nuclease (137 aa).

It belongs to the YqgF nuclease family.

The protein resides in the cytoplasm. Its function is as follows. Could be a nuclease involved in processing of the 5'-end of pre-16S rRNA. The chain is Putative pre-16S rRNA nuclease from Anaeromyxobacter dehalogenans (strain 2CP-1 / ATCC BAA-258).